A 257-amino-acid polypeptide reads, in one-letter code: Phosphonates import ATP-binding protein PhnC (257 aa).

Residues 4–248 (IEFKDVNKVY…VFNDIYGRKL (245 aa)) form the ABC transporter domain. 37 to 44 (GLSGAGKS) lines the ATP pocket.

This sequence belongs to the ABC transporter superfamily. Phosphonates importer (TC 3.A.1.9.1) family. The complex is composed of two ATP-binding proteins (PhnC), two transmembrane proteins (PhnE) and a solute-binding protein (PhnD).

It is found in the cell membrane. It catalyses the reaction phosphonate(out) + ATP + H2O = phosphonate(in) + ADP + phosphate + H(+). Its function is as follows. Part of the ABC transporter complex PhnCDE involved in phosphonates import. Responsible for energy coupling to the transport system. The protein is Phosphonates import ATP-binding protein PhnC of Staphylococcus haemolyticus (strain JCSC1435).